Consider the following 122-residue polypeptide: NADH-quinone oxidoreductase subunit A (122 aa).

The next 3 membrane-spanning stretches (helical) occupy residues 10–30 (LIVFVFLCLGVLLPIGALTIG), 67–87 (FALLFVIFDVETVFLYPWAVV), and 91–111 (LGLFALVEMIIFIVLLAIGLI).

Belongs to the complex I subunit 3 family. As to quaternary structure, NDH-1 is composed of 14 different subunits. Subunits NuoA, H, J, K, L, M, N constitute the membrane sector of the complex.

It localises to the cell membrane. It catalyses the reaction a quinone + NADH + 5 H(+)(in) = a quinol + NAD(+) + 4 H(+)(out). Its function is as follows. NDH-1 shuttles electrons from NADH, via FMN and iron-sulfur (Fe-S) centers, to quinones in the respiratory chain. The immediate electron acceptor for the enzyme in this species is believed to be a menaquinone. Couples the redox reaction to proton translocation (for every two electrons transferred, four hydrogen ions are translocated across the cytoplasmic membrane), and thus conserves the redox energy in a proton gradient. The sequence is that of NADH-quinone oxidoreductase subunit A from Geobacillus thermodenitrificans (strain NG80-2).